The following is a 1017-amino-acid chain: DNA polymerase (1017 aa).

The protein belongs to the DNA polymerase type-B family. As to quaternary structure, heterodimer with the terminal protein; this heterodimer binds to bp 9 to 18 of the genome. Forms a complex with viral pTP, DBP and hosts NFIA and POU2F1/OCT1 for initiation of replication.

It localises to the host nucleus. The enzyme catalyses DNA(n) + a 2'-deoxyribonucleoside 5'-triphosphate = DNA(n+1) + diphosphate. In terms of biological role, eukaryotic-type DNA polymerase involved in viral genomic replication. DNA synthesis is protein primed, and acts in a strand displacement replication. Assembles in complex with viral pTP, DBP, host NFIA and host POU2F1/OCT1 on viral origin of replication. The polymerase covalently transfers dCMP onto pTP, thereby initiating complementary strand synthesis. This is DNA polymerase from Bovine adenovirus 2 (BAdV-2).